We begin with the raw amino-acid sequence, 441 residues long: tRNA modification GTPase MnmE (441 aa).

(6S)-5-formyl-5,6,7,8-tetrahydrofolate is bound by residues Arg24, Glu81, and Lys121. One can recognise a TrmE-type G domain in the interval 218 to 366 (GMVVAIAGPP…LLRELTRFAA (149 aa)). Residues 228-233 (NVGKST), 247-253 (SPHAGTT), and 272-275 (DTAG) each bind GTP. Positions 232 and 253 each coordinate Mg(2+). Lys441 lines the (6S)-5-formyl-5,6,7,8-tetrahydrofolate pocket.

The protein belongs to the TRAFAC class TrmE-Era-EngA-EngB-Septin-like GTPase superfamily. TrmE GTPase family. As to quaternary structure, homodimer. Heterotetramer of two MnmE and two MnmG subunits. The cofactor is K(+).

It is found in the cytoplasm. Exhibits a very high intrinsic GTPase hydrolysis rate. Involved in the addition of a carboxymethylaminomethyl (cmnm) group at the wobble position (U34) of certain tRNAs, forming tRNA-cmnm(5)s(2)U34. The polypeptide is tRNA modification GTPase MnmE (Rhodopseudomonas palustris (strain ATCC BAA-98 / CGA009)).